The following is a 183-amino-acid chain: Small ribosomal subunit protein uS4 (183 aa).

The S4 RNA-binding domain occupies Arg-106 to His-168.

Belongs to the universal ribosomal protein uS4 family. In terms of assembly, part of the 30S ribosomal subunit. Contacts protein S5. The interaction surface between S4 and S5 is involved in control of translational fidelity.

One of the primary rRNA binding proteins, it binds directly to 16S rRNA where it nucleates assembly of the body of the 30S subunit. In terms of biological role, with S5 and S12 plays an important role in translational accuracy. This Methanothrix thermoacetophila (strain DSM 6194 / JCM 14653 / NBRC 101360 / PT) (Methanosaeta thermophila) protein is Small ribosomal subunit protein uS4.